The following is a 254-amino-acid chain: 3-deoxy-manno-octulosonate cytidylyltransferase (254 aa).

This sequence belongs to the KdsB family.

The protein resides in the cytoplasm. The catalysed reaction is 3-deoxy-alpha-D-manno-oct-2-ulosonate + CTP = CMP-3-deoxy-beta-D-manno-octulosonate + diphosphate. Its pathway is nucleotide-sugar biosynthesis; CMP-3-deoxy-D-manno-octulosonate biosynthesis; CMP-3-deoxy-D-manno-octulosonate from 3-deoxy-D-manno-octulosonate and CTP: step 1/1. It participates in bacterial outer membrane biogenesis; lipopolysaccharide biosynthesis. Its function is as follows. Activates KDO (a required 8-carbon sugar) for incorporation into bacterial lipopolysaccharide in Gram-negative bacteria. The protein is 3-deoxy-manno-octulosonate cytidylyltransferase of Chlamydia felis (strain Fe/C-56) (Chlamydophila felis).